The following is a 477-amino-acid chain: Argininosuccinate lyase (477 aa).

Belongs to the lyase 1 family. Argininosuccinate lyase subfamily.

It is found in the cytoplasm. The enzyme catalyses 2-(N(omega)-L-arginino)succinate = fumarate + L-arginine. It functions in the pathway amino-acid biosynthesis; L-arginine biosynthesis; L-arginine from L-ornithine and carbamoyl phosphate: step 3/3. The chain is Argininosuccinate lyase from Corynebacterium efficiens (strain DSM 44549 / YS-314 / AJ 12310 / JCM 11189 / NBRC 100395).